Here is an 89-residue protein sequence, read N- to C-terminus: Large ribosomal subunit protein bL27 (89 aa).

The disordered stretch occupies residues 1–21; that stretch reads MAHKKAGGSSRNGRDSESKRL.

The protein belongs to the bacterial ribosomal protein bL27 family.

The protein is Large ribosomal subunit protein bL27 of Brucella anthropi (strain ATCC 49188 / DSM 6882 / CCUG 24695 / JCM 21032 / LMG 3331 / NBRC 15819 / NCTC 12168 / Alc 37) (Ochrobactrum anthropi).